The chain runs to 245 residues: 1-(5-phosphoribosyl)-5-[(5-phosphoribosylamino)methylideneamino] imidazole-4-carboxamide isomerase (245 aa).

Aspartate 8 (proton acceptor) is an active-site residue. Aspartate 130 acts as the Proton donor in catalysis.

This sequence belongs to the HisA/HisF family.

The protein resides in the cytoplasm. The enzyme catalyses 1-(5-phospho-beta-D-ribosyl)-5-[(5-phospho-beta-D-ribosylamino)methylideneamino]imidazole-4-carboxamide = 5-[(5-phospho-1-deoxy-D-ribulos-1-ylimino)methylamino]-1-(5-phospho-beta-D-ribosyl)imidazole-4-carboxamide. The protein operates within amino-acid biosynthesis; L-histidine biosynthesis; L-histidine from 5-phospho-alpha-D-ribose 1-diphosphate: step 4/9. The polypeptide is 1-(5-phosphoribosyl)-5-[(5-phosphoribosylamino)methylideneamino] imidazole-4-carboxamide isomerase (Pseudomonas putida (strain GB-1)).